Reading from the N-terminus, the 229-residue chain is Peptidase E (229 aa).

Catalysis depends on charge relay system residues S120, D135, and H157.

This sequence belongs to the peptidase S51 family.

The protein localises to the cytoplasm. It catalyses the reaction Dipeptidase E catalyzes the hydrolysis of dipeptides Asp-|-Xaa. It does not act on peptides with N-terminal Glu, Asn or Gln, nor does it cleave isoaspartyl peptides.. In terms of biological role, hydrolyzes dipeptides containing N-terminal aspartate residues. May play a role in allowing the cell to use peptide aspartate to spare carbon otherwise required for the synthesis of the aspartate family of amino acids. The polypeptide is Peptidase E (Shigella boydii serotype 18 (strain CDC 3083-94 / BS512)).